The sequence spans 22 residues: Alpha-amylase inhibitor DR4 (22 aa).

A disordered region spans residues serine 1–alanine 22.

Inhibits insect alpha-amylases. The polypeptide is Alpha-amylase inhibitor DR4 (Delonix regia (Royal poinciana)).